Reading from the N-terminus, the 207-residue chain is Protein FMP32, mitochondrial (207 aa).

Positions 100–136 (ADRSEFHNIQNEYESVKNDLEKLRNKLREEITKTNAG) form a coiled coil. The helical transmembrane segment at 184-206 (VMQWLIGVCTGTFALVLAYMRLL) threads the bilayer.

It belongs to the CCDC90 family.

The protein resides in the mitochondrion. It is found in the membrane. The chain is Protein FMP32, mitochondrial (FMP32) from Saccharomyces cerevisiae (strain ATCC 204508 / S288c) (Baker's yeast).